The chain runs to 622 residues: Deoxynucleoside triphosphate triphosphohydrolase SAMHD1 (622 aa).

The SAM domain occupies 26–89; the sequence is WDVEDTVAYL…LHCLQKLSQI (64 aa). 2 residues coordinate GTP: Lys-95 and Val-96. Asn-98 is a binding site for dGTP. GTP contacts are provided by Asp-116, Gln-121, and Arg-124. DGTP contacts are provided by Gln-128, Leu-129, Val-135, and Arg-143. Residue Gln-128 coordinates dATP. Residue Gln-128 coordinates dCTP. DTTP is bound at residue Gln-128. Arg-143 contributes to the dATP binding site. Arg-143 is a dCTP binding site. Arg-143 is a binding site for dTTP. The HD domain occupies 143–296; it reads RFEHSIGVGY…GIDVDKWDYF (154 aa). Residues His-146, His-185, and Asp-186 each contribute to the Mn(2+) site. DATP is bound by residues His-189 and His-194. DCTP-binding residues include His-189 and His-194. Residues His-189 and His-194 each contribute to the dTTP site. Residue His-212 is part of the active site. Asp-291 provides a ligand contact to Mn(2+). Positions 292, 295, 299, 313, 332, 334, 338, 346, 354, 355, 356, and 357 each coordinate dGTP. DATP contacts are provided by Lys-292, Tyr-295, and Asp-299. DCTP is bound by residues Lys-292, Tyr-295, and Asp-299. Residues Lys-292, Tyr-295, and Asp-299 each coordinate dTTP. Arg-346 lines the dATP pocket. Arg-346 is a binding site for dCTP. Gln-355 lines the dATP pocket. Residue Gln-355 participates in dCTP binding. Gln-355 lines the dTTP pocket. Residues Arg-431, Lys-435, and Lys-502 each coordinate GTP. Lys-502 contributes to the dGTP binding site. Residues 571-622 form a disordered region; sequence TPLKQDWHAREDEDEEEEEKHRQNQTLPHHTPQRTGRNVKVDLFQARGETKL. A compositionally biased stretch (polar residues) spans 594–606; sequence NQTLPHHTPQRTG.

The protein belongs to the SAMHD1 family. In terms of assembly, homodimer; in absence of GTP and dNTP. Homotetramer; in GTP- and dNTP-bound form. Interacts with rbbp8/CtIP. Zn(2+) is required as a cofactor.

The protein localises to the nucleus. It is found in the chromosome. It catalyses the reaction a 2'-deoxyribonucleoside 5'-triphosphate + H2O = a 2'-deoxyribonucleoside + triphosphate + H(+). The enzyme catalyses dATP + H2O = 2'-deoxyadenosine + triphosphate + H(+). It carries out the reaction dCTP + H2O = 2'-deoxycytidine + triphosphate + H(+). The catalysed reaction is dGTP + H2O = 2'-deoxyguanosine + triphosphate + H(+). It catalyses the reaction dTTP + H2O = thymidine + triphosphate + H(+). With respect to regulation, allosterically activated and regulated via the combined actions of GTP and dNTPs (dATP, dGTP, dTTP and dCTP): Allosteric site 1 binds GTP, while allosteric site 2 binds dNTP. Allosteric activation promotes the formation of highly active homotetramers. In terms of biological role, protein that acts both as a host restriction factor involved in defense response to virus and as a regulator of DNA end resection at stalled replication forks. Has deoxynucleoside triphosphate (dNTPase) activity, which is required to restrict infection by viruses: dNTPase activity reduces cellular dNTP levels to levels too low for retroviral reverse transcription to occur, blocking early-stage virus replication in dendritic and other myeloid cells. Functions during S phase at stalled DNA replication forks to promote the resection of gapped or reversed forks: acts by stimulating the exonuclease activity of MRE11, activating the ATR-CHK1 pathway and allowing the forks to restart replication. Its ability to promote degradation of nascent DNA at stalled replication forks is required to prevent induction of type I interferons, thereby preventing chronic inflammation. Ability to promote DNA end resection at stalled replication forks is independent of dNTPase activity. The chain is Deoxynucleoside triphosphate triphosphohydrolase SAMHD1 from Danio rerio (Zebrafish).